The sequence spans 578 residues: Septation ring formation regulator EzrA (578 aa).

At 1 to 8 (MKNNWIII) the chain is on the extracellular side. The helical transmembrane segment at 9–27 (LVLVIVIIAAVLYLIGYFM) threads the bilayer. Residues 28–578 (RKKNQEQLDE…NINNPNLTAI (551 aa)) are Cytoplasmic-facing. Coiled coils occupy residues 103-165 (RFMK…DDKA), 256-285 (QNFA…AAVE), and 394-490 (KILD…DDLE).

The protein belongs to the EzrA family.

It localises to the cell membrane. Functionally, negative regulator of FtsZ ring formation; modulates the frequency and position of FtsZ ring formation. Inhibits FtsZ ring formation at polar sites. Interacts either with FtsZ or with one of its binding partners to promote depolymerization. The sequence is that of Septation ring formation regulator EzrA from Enterococcus faecalis (strain ATCC 700802 / V583).